Consider the following 286-residue polypeptide: ATP synthase gamma chain (286 aa).

This sequence belongs to the ATPase gamma chain family. In terms of assembly, F-type ATPases have 2 components, CF(1) - the catalytic core - and CF(0) - the membrane proton channel. CF(1) has five subunits: alpha(3), beta(3), gamma(1), delta(1), epsilon(1). CF(0) has three main subunits: a, b and c.

The protein resides in the cell inner membrane. Functionally, produces ATP from ADP in the presence of a proton gradient across the membrane. The gamma chain is believed to be important in regulating ATPase activity and the flow of protons through the CF(0) complex. This is ATP synthase gamma chain from Shewanella baltica (strain OS223).